Reading from the N-terminus, the 123-residue chain is Large ribosomal subunit protein uL14 (123 aa).

The protein belongs to the universal ribosomal protein uL14 family. Part of the 50S ribosomal subunit. Forms a cluster with proteins L3 and L19. In the 70S ribosome, L14 and L19 interact and together make contacts with the 16S rRNA in bridges B5 and B8.

In terms of biological role, binds to 23S rRNA. Forms part of two intersubunit bridges in the 70S ribosome. This Actinobacillus pleuropneumoniae serotype 7 (strain AP76) protein is Large ribosomal subunit protein uL14.